A 147-amino-acid chain; its full sequence is Siroheme decarboxylase NirG subunit (147 aa).

Belongs to the Ahb/Nir family. As to quaternary structure, probably forms a complex composed of NirD, NirL, NirG and NirH. All proteins are required for the total conversion of siroheme to didecarboxysiroheme.

It catalyses the reaction siroheme + 2 H(+) = 12,18-didecarboxysiroheme + 2 CO2. The protein operates within porphyrin-containing compound metabolism. Its function is as follows. Involved in heme d1 biosynthesis. Catalyzes the decarboxylation of siroheme into didecarboxysiroheme. The chain is Siroheme decarboxylase NirG subunit from Pseudomonas aeruginosa (strain ATCC 15692 / DSM 22644 / CIP 104116 / JCM 14847 / LMG 12228 / 1C / PRS 101 / PAO1).